The following is a 298-amino-acid chain: Inosose dehydratase (298 aa).

The protein belongs to the IolE/MocC family. The cofactor is glutathione. It depends on Co(2+) as a cofactor. Mn(2+) serves as cofactor.

The catalysed reaction is scyllo-inosose = 3D-3,5/4-trihydroxycyclohexane-1,2-dione + H2O. Its function is as follows. Catalyzes the dehydration of inosose (2-keto-myo-inositol, 2KMI or 2,4,6/3,5-pentahydroxycyclohexanone) to 3D-(3,5/4)-trihydroxycyclohexane-1,2-dione (D-2,3-diketo-4-deoxy-epi-inositol). The chain is Inosose dehydratase from Glaesserella parasuis serovar 5 (strain SH0165) (Haemophilus parasuis).